The following is a 166-amino-acid chain: NADH-quinone oxidoreductase subunit A (166 aa).

The next 3 helical transmembrane spans lie at 16–36, 68–88, and 98–118; these read FAVF…GAYF, FYLV…LYAW, and IGFI…FYLV. The interval 141–166 is disordered; the sequence is RYASSHPQDISQELSVAGSQQANESR.

This sequence belongs to the complex I subunit 3 family. In terms of assembly, NDH-1 is composed of 13 different subunits. Subunits NuoA, H, J, K, L, M, N constitute the membrane sector of the complex.

Its subcellular location is the cell inner membrane. It carries out the reaction a quinone + NADH + 5 H(+)(in) = a quinol + NAD(+) + 4 H(+)(out). In terms of biological role, NDH-1 shuttles electrons from NADH, via FMN and iron-sulfur (Fe-S) centers, to quinones in the respiratory chain. The immediate electron acceptor for the enzyme in this species is believed to be ubiquinone. Couples the redox reaction to proton translocation (for every two electrons transferred, four hydrogen ions are translocated across the cytoplasmic membrane), and thus conserves the redox energy in a proton gradient. This is NADH-quinone oxidoreductase subunit A from Yersinia pseudotuberculosis serotype O:1b (strain IP 31758).